The following is a 177-amino-acid chain: B-phycoerythrin beta chain (177 aa).

Residues C50 and C61 each coordinate phycourobilin. N72 carries the N4-methylasparagine modification. (2R,3E)-phycoerythrobilin is bound by residues C82 and C158.

Belongs to the phycobiliprotein family. As to quaternary structure, heteromer of 6 alpha, 6 beta and one gamma chain. In terms of processing, contains two covalently linked phycoerythrobilin chromophores and one covalently linked phycourobilin chromophore.

The protein localises to the plastid. Its subcellular location is the chloroplast thylakoid membrane. Its function is as follows. Light-harvesting photosynthetic bile pigment-protein from the phycobiliprotein complex. The chain is B-phycoerythrin beta chain (cpeB) from Porphyridium sordidum (Red alga).